The following is a 172-amino-acid chain: uncharacterized protein (172 aa).

An N-terminal signal peptide occupies residues M1–G21. Residue C22 is the site of N-palmitoyl cysteine attachment. C22 carries S-diacylglycerol cysteine lipidation.

It is found in the cell membrane. This is an uncharacterized protein from Escherichia coli O157:H7.